A 949-amino-acid chain; its full sequence is MAM domain-containing glycosylphosphatidylinositol anchor protein 2 (949 aa).

The first 25 residues, 1 to 25, serve as a signal peptide directing secretion; the sequence is MDLVYGLVWLLTVLLEGISGQGVYA. 2 consecutive Ig-like domains span residues 27-127 and 134-232; these read PTVR…IRVD and PVVT…KMVS. 2 disulfides stabilise this stretch: Cys-62-Cys-110 and Cys-159-Cys-216. Asn-92, Asn-213, and Asn-237 each carry an N-linked (GlcNAc...) asparagine glycan. 4 consecutive Ig-like domains span residues 242–328, 340–436, 442–533, and 540–627; these read PSIK…NIIV, PDPY…VNIS, PNLT…ALVQ, and PAVE…FLVT. Intrachain disulfides connect Cys-264-Cys-310 and Cys-359-Cys-417. 5 N-linked (GlcNAc...) asparagine glycosylation sites follow: Asn-434, Asn-443, Asn-504, Asn-610, and Asn-703. 2 disulfide bridges follow: Cys-465-Cys-515 and Cys-561-Cys-611. The Fibronectin type-III domain maps to 638-738; sequence DTYNPVWQNR…TIRVIKYTGE (101 aa). Positions 739-914 constitute an MAM domain; that stretch reads FHCGFEDGNI…VSIAEGECAK (176 aa). The GPI-anchor amidated aspartate moiety is linked to residue Asp-924. Positions 925 to 949 are cleaved as a propeptide — removed in mature form; sequence GAVGILVHIWLFPVIILISILSPRR.

In terms of assembly, interacts (through the Ig-like domains) with NLGN2.

Its subcellular location is the cell membrane. In terms of biological role, may be involved in cell-cell interactions. This is MAM domain-containing glycosylphosphatidylinositol anchor protein 2 (Mdga2) from Mus musculus (Mouse).